The sequence spans 380 residues: MSTTTGQVIRCKAAVAWEAGKPLVMEEVDVAPPQKMEVRLKILYTSLCHTDVYFWEAKGQNPVFPRILGHEAAGIVESVGEGVTELAPGDHVLPVFTGECKDCAHCKSEESNMCSLLRINTDRGVMINDGQSRFSINGKPIYHFVGTSTFSEYTVVHVGCVAKINPLAPLDKVCVLSCGISTGLGATLNVAKPTKGSSVAIFGLGAVGLAAAEGARIAGASRIIGVDLNASRFEQAKKFGVTEFVNPKDYSKPVQEVIAEMTDGGVDRSVECTGHIDAMISAFECVHDGWGVAVLVGVPHKEAVFKTHPMNFLNERTLKGTFFGNYKPRSDIPSVVEKYMNKELELEKFITHTLPFAEINKAFDLMLKGEGLRCIITMED.

Residues cysteine 48, threonine 50, histidine 70, cysteine 100, cysteine 103, cysteine 106, cysteine 114, and cysteine 178 each coordinate Zn(2+). An alcohol contacts are provided by threonine 50 and histidine 70. Threonine 50 serves as a coordination point for NAD(+). Residues 203–208, aspartate 227, arginine 232, threonine 273, valine 296, 296–298, phenylalanine 323, and arginine 373 each bind NAD(+); these read GLGAVG and VGV.

It belongs to the zinc-containing alcohol dehydrogenase family. Homodimer. Homotetramer. Zn(2+) serves as cofactor.

It localises to the cytoplasm. The catalysed reaction is a primary alcohol + NAD(+) = an aldehyde + NADH + H(+). The enzyme catalyses a secondary alcohol + NAD(+) = a ketone + NADH + H(+). The sequence is that of Alcohol dehydrogenase 2 (ADH2) from Solanum tuberosum (Potato).